The chain runs to 1246 residues: Respiratory nitrate reductase 2 alpha chain (1246 aa).

In terms of domain architecture, 4Fe-4S Mo/W bis-MGD-type spans 43-107; that stretch reads DKIVRSTHGV…SYSWYLYSAN (65 aa). Residues histidine 50, cysteine 54, cysteine 58, and cysteine 93 each coordinate [4Fe-4S] cluster. Aspartate 223 contacts Mo-bis(molybdopterin guanine dinucleotide).

Belongs to the prokaryotic molybdopterin-containing oxidoreductase family. In terms of assembly, tetramer composed of an alpha, a beta and 2 gamma chains. Alpha and beta are catalytic chains; gamma chain is involved in binding the enzyme complex to the cytoplasmic membrane. Requires [4Fe-4S] cluster as cofactor. The cofactor is Mo-bis(molybdopterin guanine dinucleotide).

It localises to the cell membrane. It carries out the reaction nitrate + a quinol = a quinone + nitrite + H2O. This is a second nitrate reductase enzyme which can substitute for the NRA enzyme and allows E.coli to use nitrate as an electron acceptor during anaerobic growth. Its function is as follows. The alpha chain is the actual site of nitrate reduction. The polypeptide is Respiratory nitrate reductase 2 alpha chain (narZ) (Escherichia coli (strain K12)).